The following is a 121-amino-acid chain: Large ribosomal subunit protein uL14c (121 aa).

It belongs to the universal ribosomal protein uL14 family. As to quaternary structure, part of the 50S ribosomal subunit.

Its subcellular location is the plastid. It localises to the apicoplast. In terms of biological role, binds to 23S rRNA. In Toxoplasma gondii, this protein is Large ribosomal subunit protein uL14c (rpl14).